A 428-amino-acid polypeptide reads, in one-letter code: MSAIVDIFAREILDSRGNPTVECDVLLESGVMGRAAVPSGASTGQKEALELRDGDKSRYSGKGVLKAVEHVNNQIAQALIGIDANEQSYIDQIMIELDGTENKGNLGANATLAVSMAVARAAAEDSGLPLYRYLGGAGPMSLPVPMMNVINGGEHANNSLNIQEFMIMPVGAKSFREALRCGAEIFHALKKLCDSKGFPTTVGDEGGFAPNLNSHKEALQLMVEATEAAGYKAGEDVLFALDCASSEFYKDGKYHLEAEGRSYTNAEFAEYLEGLVNEFPIISIEDGMDENDWEGWKLLTEKLGGKVQLVGDDLFVTNPKILAEGIEKGVANALLVKVNQIGTLSETLKAVDLAKRNRYASVMSHRSGETEDSTIADLAVATNCMQIKTGSLSRSDRMAKYNQLLRIEEELAEAADYPSKAAFYQLGK.

Position 163 (glutamine 163) interacts with (2R)-2-phosphoglycerate. The active-site Proton donor is glutamate 205. Positions 242, 285, and 312 each coordinate Mg(2+). Lysine 337, arginine 366, serine 367, and lysine 388 together coordinate (2R)-2-phosphoglycerate. Residue lysine 337 is the Proton acceptor of the active site.

Belongs to the enolase family. Requires Mg(2+) as cofactor.

It is found in the cytoplasm. The protein resides in the secreted. It localises to the cell surface. It catalyses the reaction (2R)-2-phosphoglycerate = phosphoenolpyruvate + H2O. It functions in the pathway carbohydrate degradation; glycolysis; pyruvate from D-glyceraldehyde 3-phosphate: step 4/5. Functionally, catalyzes the reversible conversion of 2-phosphoglycerate (2-PG) into phosphoenolpyruvate (PEP). It is essential for the degradation of carbohydrates via glycolysis. The sequence is that of Enolase from Neisseria meningitidis serogroup A / serotype 4A (strain DSM 15465 / Z2491).